Reading from the N-terminus, the 123-residue chain is Small ribosomal subunit protein uS12 (123 aa).

Aspartate 89 is subject to 3-methylthioaspartic acid.

The protein belongs to the universal ribosomal protein uS12 family. As to quaternary structure, part of the 30S ribosomal subunit. Contacts proteins S8 and S17. May interact with IF1 in the 30S initiation complex.

Functionally, with S4 and S5 plays an important role in translational accuracy. Its function is as follows. Interacts with and stabilizes bases of the 16S rRNA that are involved in tRNA selection in the A site and with the mRNA backbone. Located at the interface of the 30S and 50S subunits, it traverses the body of the 30S subunit contacting proteins on the other side and probably holding the rRNA structure together. The combined cluster of proteins S8, S12 and S17 appears to hold together the shoulder and platform of the 30S subunit. The chain is Small ribosomal subunit protein uS12 from Syntrophotalea carbinolica (strain DSM 2380 / NBRC 103641 / GraBd1) (Pelobacter carbinolicus).